We begin with the raw amino-acid sequence, 275 residues long: Tropinone reductase-like 2 (275 aa).

Position 17-41 (17-41 (IITGGASGIGACTAELFHENGAKVV)) interacts with NAD(+). Residue Ser-150 coordinates substrate. The active-site Proton acceptor is the Tyr-163.

It belongs to the short-chain dehydrogenases/reductases (SDR) family.

Has no tropinone reductase activity. The chain is Tropinone reductase-like 2 from Erythroxylum coca (Coca plant).